A 720-amino-acid chain; its full sequence is Polyribonucleotide nucleotidyltransferase (720 aa).

Mg(2+) contacts are provided by aspartate 487 and aspartate 493. The KH domain occupies 554–613; that stretch reads PRIETFKIPTDKIREVIGTGGKVIREIVEKTGAKVNIEDDGTVKVASSDGEAMKAAIKWI. The S1 motif domain maps to 623-691; the sequence is GQIYDGTVVK…DRGKTRLSMK (69 aa). The tract at residues 692–720 is disordered; sequence AVDQTTGEDLEAKQKAEGGAEAPREAAGE. A compositionally biased stretch (basic and acidic residues) spans 701–720; it reads LEAKQKAEGGAEAPREAAGE.

It belongs to the polyribonucleotide nucleotidyltransferase family. Mg(2+) serves as cofactor.

Its subcellular location is the cytoplasm. The enzyme catalyses RNA(n+1) + phosphate = RNA(n) + a ribonucleoside 5'-diphosphate. In terms of biological role, involved in mRNA degradation. Catalyzes the phosphorolysis of single-stranded polyribonucleotides processively in the 3'- to 5'-direction. The polypeptide is Polyribonucleotide nucleotidyltransferase (Bradyrhizobium sp. (strain BTAi1 / ATCC BAA-1182)).